The chain runs to 419 residues: Protein indeterminate-domain 14 (419 aa).

The interval 1 to 58 is disordered; the sequence is MIDYERSNTTKNINTHHHNPPPSSSSSDLLPDGNGTAVTQKRKRRPAGTPDPEAEVVS. C2H2-type zinc fingers lie at residues 70-92, 112-142, and 148-175; these read YVCE…RRRH, YVCP…RRKH, and WICE…TRGH. Zn(2+) contacts are provided by cysteine 150, cysteine 153, histidine 166, cysteine 170, cysteine 177, cysteine 179, histidine 192, and cysteine 196. The CCHC-type 2; atypical zinc-finger motif lies at 175–198; the sequence is HSCDCGRVFSRVESFIEHQDTCTV. Residues 185–197 form an SHR-binding region; the sequence is RVESFIEHQDTCT. Disordered stretches follow at residues 200–259 and 298–318; these read RSQP…PSTL and SEVE…EEAR. 2 stretches are compositionally biased toward low complexity: residues 213-230 and 246-259; these read QHTT…NNEN and RRQS…PSTL. Residues 313-349 adopt a coiled-coil conformation; the sequence is EREEARRETKRQIEIAELEFAEAKRIRQHARAELHKA.

As to quaternary structure, homo- and heterodimer of IDD14alpha and IDD14beta. As to expression, expressed in cotyledons and the vasculature of reosette leaves. Weak expression in hypocotyls and floral organs, but not detected in roots and inflorescence stems.

Its subcellular location is the nucleus. Functionally, transcription factor regulating starch metabolism by binding directly to the promoter of QQS. The IDD14beta isoform attenuates the transcription factor activity by competitively forming heterodimers with reduced DNA-binding capacity. Regulates lateral organ morphogenesis and gravitropic responses. Has a redundant role with IDD16 in directing leaf and floral organ morphogenesis. Involved in the establishment of auxin gradients through the regulation of auxin biosynthesis and transport. In Arabidopsis thaliana (Mouse-ear cress), this protein is Protein indeterminate-domain 14.